We begin with the raw amino-acid sequence, 116 residues long: Large ribosomal subunit protein bL17 (116 aa).

The protein belongs to the bacterial ribosomal protein bL17 family. As to quaternary structure, part of the 50S ribosomal subunit. Contacts protein L32.

This Gloeobacter violaceus (strain ATCC 29082 / PCC 7421) protein is Large ribosomal subunit protein bL17.